A 173-amino-acid chain; its full sequence is Protein-export protein SecB (173 aa).

The segment at 148 to 173 (QQQKQRREQGTSDSAPSGSPDNGGRQ) is disordered. Polar residues predominate over residues 158–167 (TSDSAPSGSP).

It belongs to the SecB family. In terms of assembly, homotetramer, a dimer of dimers. One homotetramer interacts with 1 SecA dimer.

It localises to the cytoplasm. Functionally, one of the proteins required for the normal export of preproteins out of the cell cytoplasm. It is a molecular chaperone that binds to a subset of precursor proteins, maintaining them in a translocation-competent state. It also specifically binds to its receptor SecA. The chain is Protein-export protein SecB from Halorhodospira halophila (strain DSM 244 / SL1) (Ectothiorhodospira halophila (strain DSM 244 / SL1)).